The following is a 128-amino-acid chain: Sulfurtransferase TusD (128 aa).

The Cysteine persulfide intermediate role is filled by C78.

This sequence belongs to the DsrE/TusD family. As to quaternary structure, heterohexamer, formed by a dimer of trimers. The hexameric TusBCD complex contains 2 copies each of TusB, TusC and TusD. The TusBCD complex interacts with TusE.

The protein resides in the cytoplasm. Part of a sulfur-relay system required for 2-thiolation of 5-methylaminomethyl-2-thiouridine (mnm(5)s(2)U) at tRNA wobble positions. Accepts sulfur from TusA and transfers it in turn to TusE. This Escherichia coli O157:H7 protein is Sulfurtransferase TusD.